A 439-amino-acid polypeptide reads, in one-letter code: IAA-amino acid hydrolase ILR1-like 2 (439 aa).

An N-terminal signal peptide occupies residues 1 to 21 (MALNKLLSLTFQLLLFLLSVS). Residues Cys-137, His-139, Glu-173, His-197, and His-397 each coordinate Mn(2+). Positions 436-439 (HEEL) match the Prevents secretion from ER motif.

This sequence belongs to the peptidase M20 family. Monomer. The cofactor is Mn(2+). In terms of tissue distribution, expressed in leaves, stems, siliques, seeds and flowers. Detected in the distal tips of cotyledons and seedling leaves, hydathodes of leaves from mature plants, pollen, ovules and developing seeds.

The protein resides in the endoplasmic reticulum lumen. Its function is as follows. Hydrolyzes certain amino acid conjugates of the plant growth regulator indole-3-acetic acid (IAA), including IAA-Ala, IAA-Leu, IAA-Met, IAA-Phe, IAA-Ser, IAA-Thr, IAA-Tyr and IAA-Val. Is the most efficient enzyme of the ILL family for IAA-Ala. Not important for IAA-Leu hydrolysis in roots. May act with ILR1 to provide free IAA to germinating seedlings. The sequence is that of IAA-amino acid hydrolase ILR1-like 2 from Arabidopsis thaliana (Mouse-ear cress).